The following is a 124-amino-acid chain: Small ribosomal subunit protein uS12 (124 aa).

Positions 1–25 are disordered; the sequence is MATINQLVRKPRQATTYKSASPALD. Asp89 carries the post-translational modification 3-methylthioaspartic acid.

This sequence belongs to the universal ribosomal protein uS12 family. Part of the 30S ribosomal subunit. Contacts proteins S8 and S17. May interact with IF1 in the 30S initiation complex.

With S4 and S5 plays an important role in translational accuracy. In terms of biological role, interacts with and stabilizes bases of the 16S rRNA that are involved in tRNA selection in the A site and with the mRNA backbone. Located at the interface of the 30S and 50S subunits, it traverses the body of the 30S subunit contacting proteins on the other side and probably holding the rRNA structure together. The combined cluster of proteins S8, S12 and S17 appears to hold together the shoulder and platform of the 30S subunit. This chain is Small ribosomal subunit protein uS12, found in Xanthomonas campestris pv. campestris (strain 8004).